The sequence spans 251 residues: Phosphate import ATP-binding protein PstB (251 aa).

The ABC transporter domain occupies 5-246 (IEIENFSAYY…PKNRLTEEYL (242 aa)). 37-44 (GPSGCGKT) is a binding site for ATP.

This sequence belongs to the ABC transporter superfamily. Phosphate importer (TC 3.A.1.7) family. As to quaternary structure, the complex is composed of two ATP-binding proteins (PstB), two transmembrane proteins (PstC and PstA) and a solute-binding protein (PstS).

Its subcellular location is the cell inner membrane. The catalysed reaction is phosphate(out) + ATP + H2O = ADP + 2 phosphate(in) + H(+). Part of the ABC transporter complex PstSACB involved in phosphate import. Responsible for energy coupling to the transport system. The sequence is that of Phosphate import ATP-binding protein PstB from Thermotoga maritima (strain ATCC 43589 / DSM 3109 / JCM 10099 / NBRC 100826 / MSB8).